The primary structure comprises 378 residues: Succinate--CoA ligase [ADP-forming] subunit beta (378 aa).

One can recognise an ATP-grasp domain in the interval 9–237 (RDIVARYGIP…IAGEPESEIK (229 aa)). ATP is bound by residues K45, 52–54 (GRG), I94, and E99. Mg(2+)-binding residues include N192 and D206. Substrate contacts are provided by residues N257 and 314 to 316 (GIT).

It belongs to the succinate/malate CoA ligase beta subunit family. Heterotetramer of two alpha and two beta subunits. Requires Mg(2+) as cofactor.

The catalysed reaction is succinate + ATP + CoA = succinyl-CoA + ADP + phosphate. It carries out the reaction GTP + succinate + CoA = succinyl-CoA + GDP + phosphate. It functions in the pathway carbohydrate metabolism; tricarboxylic acid cycle; succinate from succinyl-CoA (ligase route): step 1/1. Succinyl-CoA synthetase functions in the citric acid cycle (TCA), coupling the hydrolysis of succinyl-CoA to the synthesis of either ATP or GTP and thus represents the only step of substrate-level phosphorylation in the TCA. The beta subunit provides nucleotide specificity of the enzyme and binds the substrate succinate, while the binding sites for coenzyme A and phosphate are found in the alpha subunit. This Herpetosiphon aurantiacus (strain ATCC 23779 / DSM 785 / 114-95) protein is Succinate--CoA ligase [ADP-forming] subunit beta.